The following is a 57-amino-acid chain: Large ribosomal subunit protein bL32 (57 aa).

Belongs to the bacterial ribosomal protein bL32 family.

The polypeptide is Large ribosomal subunit protein bL32 (Geobacillus kaustophilus (strain HTA426)).